We begin with the raw amino-acid sequence, 284 residues long: Ribosomal RNA small subunit methyltransferase A (284 aa).

S-adenosyl-L-methionine is bound by residues asparagine 12, leucine 14, glycine 38, glutamate 59, aspartate 81, and asparagine 106.

This sequence belongs to the class I-like SAM-binding methyltransferase superfamily. rRNA adenine N(6)-methyltransferase family. RsmA subfamily.

It localises to the cytoplasm. The enzyme catalyses adenosine(1518)/adenosine(1519) in 16S rRNA + 4 S-adenosyl-L-methionine = N(6)-dimethyladenosine(1518)/N(6)-dimethyladenosine(1519) in 16S rRNA + 4 S-adenosyl-L-homocysteine + 4 H(+). In terms of biological role, specifically dimethylates two adjacent adenosines (A1518 and A1519) in the loop of a conserved hairpin near the 3'-end of 16S rRNA in the 30S particle. May play a critical role in biogenesis of 30S subunits. This is Ribosomal RNA small subunit methyltransferase A from Phytoplasma australiense.